The following is a 335-amino-acid chain: Ubiquinone biosynthesis protein COQ4, mitochondrial (335 aa).

Residues 1-10 (MLRLSLLRST) constitute a mitochondrion transit peptide. The Zn(2+) site is built by H210, D211, H214, and E226.

Belongs to the COQ4 family. Component of a multi-subunit COQ enzyme complex, composed of at least COQ3, COQ4, COQ5, COQ6, COQ7 and COQ9. Interacts with COQ3. It depends on Zn(2+) as a cofactor.

Its subcellular location is the mitochondrion inner membrane. The catalysed reaction is 4-hydroxy-3-methoxy-5-(all-trans-hexaprenyl)benzoate + H(+) = 2-methoxy-6-(all-trans-hexaprenyl)phenol + CO2. The protein operates within cofactor biosynthesis; ubiquinone biosynthesis. Lyase that catalyzes the C1-decarboxylation of 4-hydroxy-3-methoxy-5-(all-trans-hexaprenyl)benzoic acid into 2-methoxy-6-(all-trans-hexaprenyl)phenol during ubiquinone biosynthesis. The protein is Ubiquinone biosynthesis protein COQ4, mitochondrial of Saccharomyces cerevisiae (strain AWRI1631) (Baker's yeast).